We begin with the raw amino-acid sequence, 321 residues long: Malate dehydrogenase (321 aa).

NAD(+)-binding positions include 10–15 (GSGMIG) and D34. R83 and R89 together coordinate substrate. Residues N96 and 119-121 (ITN) contribute to the NAD(+) site. Residues N121 and R152 each coordinate substrate. Catalysis depends on H176, which acts as the Proton acceptor.

Belongs to the LDH/MDH superfamily. MDH type 3 family.

The enzyme catalyses (S)-malate + NAD(+) = oxaloacetate + NADH + H(+). In terms of biological role, catalyzes the reversible oxidation of malate to oxaloacetate. The polypeptide is Malate dehydrogenase (Bartonella bacilliformis (strain ATCC 35685 / KC583 / Herrer 020/F12,63)).